The sequence spans 414 residues: Arrestin domain-containing protein 3 (414 aa).

2 consecutive short sequence motifs (PPxY motif) follow at residues 346 to 349 and 391 to 394; these read PPSY and PPLY. Residues 393 to 414 form a disordered region; it reads LYSEIDPNPDQSSEDRPSCPSR. Residues 405 to 414 are compositionally biased toward basic and acidic residues; the sequence is SEDRPSCPSR.

The protein belongs to the arrestin family. Interacts (via PPxY motifs) with NEDD4 (via WW domains). Interacts with ADRB2. Interacts with ADRB3. Interacts with HGS (via PPxY motifs). Does not bind TXN (thioredoxin). Interacts with ITCH.

The protein localises to the cytoplasm. It localises to the cell membrane. Its subcellular location is the lysosome. The protein resides in the endosome. It is found in the early endosome. Adapter protein that plays a role in regulating cell-surface expression of adrenergic receptors and probably also other G protein-coupled receptors. Plays a role in NEDD4-mediated ubiquitination and endocytosis af activated ADRB2 and subsequent ADRB2 degradation. May recruit NEDD4 to ADRB2. Alternatively, may function as adapter protein that does not play a major role in recruiting NEDD4 to ADRB2, but rather plays a role in a targeting ADRB2 to endosomes. In Rattus norvegicus (Rat), this protein is Arrestin domain-containing protein 3 (Arrdc3).